A 378-amino-acid chain; its full sequence is Probable methyltransferase At1g29790 (378 aa).

Topologically, residues 1–6 are cytoplasmic; sequence MAGFTM. A helical; Signal-anchor for type II membrane protein transmembrane segment spans residues 7–29; that stretch reads SLNLLLLVAMVATNILSLYHLSS. The Lumenal segment spans residues 30 to 378; it reads TTNFFQSTVK…TALLQKPVAR (349 aa). The segment at 67–87 is disordered; sequence TTHQPDKSTSTSTSRAAVSSS. Over residues 74 to 87 the composition is skewed to low complexity; sequence STSTSTSRAAVSSS. The N-linked (GlcNAc...) asparagine glycan is linked to Asn-247.

This sequence belongs to the methyltransferase superfamily.

It localises to the golgi apparatus membrane. The chain is Probable methyltransferase At1g29790 from Arabidopsis thaliana (Mouse-ear cress).